The primary structure comprises 148 residues: Large ribosomal subunit protein uL15 (148 aa).

The tract at residues 1–57 is disordered; the sequence is MRLNDVKPQKGSKKRRRRVGRGISAGQGASAGLGMRGQKSRSGSGTRPGFEGGQQPL. Positions 10-20 are enriched in basic residues; it reads KGSKKRRRRVG. Residues 23 to 35 are compositionally biased toward gly residues; sequence ISAGQGASAGLGM.

This sequence belongs to the universal ribosomal protein uL15 family. Part of the 50S ribosomal subunit.

Binds to the 23S rRNA. This Nostoc sp. (strain PCC 7120 / SAG 25.82 / UTEX 2576) protein is Large ribosomal subunit protein uL15.